Consider the following 442-residue polypeptide: Putative aminohydrolase SsnA (442 aa).

Zn(2+) is bound by residues H62, H64, H227, and D312.

This sequence belongs to the metallo-dependent hydrolases superfamily. ATZ/TRZ family.

The protein is Putative aminohydrolase SsnA (ssnA) of Escherichia coli (strain K12).